A 131-amino-acid polypeptide reads, in one-letter code: Peptide methionine sulfoxide reductase MsrB (131 aa).

Residues 8–130 (LDTWREELTD…NSLSLKLVPR (123 aa)) form the MsrB domain. The Zn(2+) site is built by Cys47, Cys50, Cys96, and Cys99. Cys119 acts as the Nucleophile in catalysis.

Belongs to the MsrB Met sulfoxide reductase family. Requires Zn(2+) as cofactor.

The catalysed reaction is L-methionyl-[protein] + [thioredoxin]-disulfide + H2O = L-methionyl-(R)-S-oxide-[protein] + [thioredoxin]-dithiol. The sequence is that of Peptide methionine sulfoxide reductase MsrB from Ectopseudomonas mendocina (strain ymp) (Pseudomonas mendocina).